Consider the following 348-residue polypeptide: Sulfate/thiosulfate import ATP-binding protein CysA (348 aa).

Residues 3–237 (IEVRNIVKEF…PASAFVHGFI (235 aa)) enclose the ABC transporter domain. 35-42 (GPSGSGKT) contributes to the ATP binding site.

The protein belongs to the ABC transporter superfamily. Sulfate/tungstate importer (TC 3.A.1.6) family. As to quaternary structure, the complex is composed of two ATP-binding proteins (CysA), two transmembrane proteins (CysT and CysW) and a solute-binding protein (CysP).

The protein localises to the cell inner membrane. The enzyme catalyses sulfate(out) + ATP + H2O = sulfate(in) + ADP + phosphate + H(+). It catalyses the reaction thiosulfate(out) + ATP + H2O = thiosulfate(in) + ADP + phosphate + H(+). Its function is as follows. Part of the ABC transporter complex CysAWTP involved in sulfate/thiosulfate import. Responsible for energy coupling to the transport system. The chain is Sulfate/thiosulfate import ATP-binding protein CysA from Rhodopseudomonas palustris (strain ATCC BAA-98 / CGA009).